A 396-amino-acid polypeptide reads, in one-letter code: FAD-dependent monooxygenase phomE' (396 aa).

Glu-3 is an FAD binding site. Active-site residues include Arg-158 and Tyr-196. FAD-binding residues include Asp-277 and Gly-290.

It belongs to the paxM FAD-dependent monooxygenase family. As to quaternary structure, monomer. It depends on FAD as a cofactor.

In terms of biological role, FAD-dependent monooxygenase; part of the gene cluster that mediates the biosynthesis of the phomopsins, a group of hexapeptide mycotoxins which infects lupins and causes lupinosis disease in livestock. The role of phomE' within the phomopsins biosynthesis pathway has still to be determined. The pathway starts with the processing of the precursor phomA by several endopeptidases including kexin proteases as well as the cluster-specific S41 family peptidase phomP1 and the oligopeptidase phomG to produce 10 identical copies of the hexapeptide Tyr-Val-Ile-Pro-Ile-Asp. After being excised from the precursor peptide, the core peptides are cyclized and modified post-translationally by enzymes encoded within the gene cluster. The timing and order of proteolysis of the phomA precursor and PTMs are still unknown. Two tyrosinase-like enzymes, phomQ1 and phomQ2, catalyze the chlorination and hydroxylation of Tyr, respectively. PhomYb, is proposed to be involved in the construction of the macrocyclic structure. The other 4 ustYa family proteins may be involved in PTMs that generate the unique structure of phomopsin A. PhomYa is required for the hydroxylation of C-beta of Tyr. PhomYc, phomYd, and phomYe are responsible for the biosynthesis of 2,3-dehydroisoleucine (dIle), 2,3-dehydroaspartic acid (dAsp), and 3,4-dehydroproline (dPro), respectively. While dIle formation by phomYc is indispensable for the installation of dAsp by phomYd, the order of the other PTMs have not been elucidated yet. Most of the biosynthetic enzymes likely have broad substrate specificity, and thus, there might be a metabolic grid from a precursor to phomopsin A. The enzyme(s) responsible for the biosynthesis of 3,4-dehydrovaline (dVal) have also not been identified yet. Finally, phomM acts as an S-adenosylmethionine-dependent alpha-N-methyltransferase that catalyzes two successive N-methylation reactions, converting N-desmethyl-phomopsin A to phomopsin A and phomopsin A further to an N,N-dimethylated congener called phomopsin E. This is FAD-dependent monooxygenase phomE' from Diaporthe leptostromiformis (Lupinosis disease fungus).